Reading from the N-terminus, the 430-residue chain is Histidine--tRNA ligase (430 aa).

The protein belongs to the class-II aminoacyl-tRNA synthetase family. As to quaternary structure, homodimer.

The protein localises to the cytoplasm. The enzyme catalyses tRNA(His) + L-histidine + ATP = L-histidyl-tRNA(His) + AMP + diphosphate + H(+). This is Histidine--tRNA ligase from Chlamydia felis (strain Fe/C-56) (Chlamydophila felis).